Here is a 163-residue protein sequence, read N- to C-terminus: Large ribosomal subunit protein uL10 (163 aa).

Belongs to the universal ribosomal protein uL10 family. Part of the ribosomal stalk of the 50S ribosomal subunit. The N-terminus interacts with L11 and the large rRNA to form the base of the stalk. The C-terminus forms an elongated spine to which L12 dimers bind in a sequential fashion forming a multimeric L10(L12)X complex.

In terms of biological role, forms part of the ribosomal stalk, playing a central role in the interaction of the ribosome with GTP-bound translation factors. The sequence is that of Large ribosomal subunit protein uL10 from Histophilus somni (strain 129Pt) (Haemophilus somnus).